The primary structure comprises 57 residues: MSEFDAQRVAERIDIVLDILVAGDYHSAIHNLEILKAELLRQVAESTPDIPKTPWEI.

This sequence belongs to the UPF0509 family.

This is UPF0509 protein YciZ (yciZ) from Shigella flexneri.